We begin with the raw amino-acid sequence, 83 residues long: MKTSMFLTLTGLVLLFVVCYASESEEKEFPKELLSSIFAADSDFKVEERGCLGDKCDYNNGCCSGYVCPRTWKWCVLAGPWRR.

The first 21 residues, 1–21, serve as a signal peptide directing secretion; that stretch reads MKTSMFLTLTGLVLLFVVCYA. Residues 22–49 constitute a propeptide that is removed on maturation; that stretch reads SESEEKEFPKELLSSIFAADSDFKVEER. 3 disulfide bridges follow: Cys51-Cys63, Cys56-Cys68, and Cys62-Cys75.

The protein belongs to the neurotoxin 10 (Hwtx-1) family. 51 (Hntx-8) subfamily. Hntx-8 sub-subfamily. As to expression, expressed by the venom gland.

The protein resides in the secreted. Its function is as follows. Agglutinates erythrocytes. The protein is U5-theraphotoxin-Hs1d of Cyriopagopus schmidti (Chinese bird spider).